A 111-amino-acid chain; its full sequence is Vacuolar ATPase assembly integral membrane protein VMA21 (111 aa).

Residues 1 to 39 (MATRRIVATEKSILEKDDHIGSSPAAGEKSNITPAVPLD) are Cytoplasmic-facing. The helical transmembrane segment at 40–60 (VILKLLAFTLAMVVIPIGSYF) threads the bilayer. Topologically, residues 61–73 (VTVNSIFKGNSTY) are lumenal. A helical membrane pass occupies residues 74–94 (AGALAAIMANVVLVAYVVVAM). Over 95–111 (NEDQTEQEKAKEGKKDR) the chain is Cytoplasmic. Residues 108 to 111 (KKDR) carry the Prevents secretion from ER motif.

It belongs to the VMA21 family.

It localises to the endoplasmic reticulum membrane. It is found in the endoplasmic reticulum-Golgi intermediate compartment membrane. Its subcellular location is the cytoplasmic vesicle. The protein localises to the COPII-coated vesicle membrane. Its function is as follows. Required for the assembly of the V0 complex of the vacuolar ATPase (V-ATPase) in the endoplasmic reticulum. This is Vacuolar ATPase assembly integral membrane protein VMA21 from Pyricularia oryzae (strain 70-15 / ATCC MYA-4617 / FGSC 8958) (Rice blast fungus).